Consider the following 309-residue polypeptide: Probable HTH-type transcriptional regulator LtrA (309 aa).

One can recognise an HTH lysR-type domain in the interval 1 to 61 (MNLNLLPDLA…QRTTRKLRLS (61 aa)). The H-T-H motif DNA-binding region spans 21–40 (FSAVARQNGITPSAVSRSVS).

Belongs to the LysR transcriptional regulatory family.

The sequence is that of Probable HTH-type transcriptional regulator LtrA (ltrA) from Klebsiella pneumoniae.